Consider the following 480-residue polypeptide: Chromosomal replication initiator protein DnaA (480 aa).

The domain I, interacts with DnaA modulators stretch occupies residues 1–71 (MKEFWQTCVS…EALAAEWYQR (71 aa)). The segment at 71 to 142 (RPVQVTFELP…DAANIVYERS (72 aa)) is domain II. The interval 143-359 (RLNTDLTFEN…GALRKVLAYA (217 aa)) is domain III, AAA+ region. 4 residues coordinate ATP: Gly-187, Gly-189, Lys-190, and Thr-191. Residues 360–480 (RFHGRDVLTV…LHVLEQTLKG (121 aa)) are domain IV, binds dsDNA.

It belongs to the DnaA family. In terms of assembly, oligomerizes as a right-handed, spiral filament on DNA at oriC.

Its subcellular location is the cytoplasm. In terms of biological role, plays an essential role in the initiation and regulation of chromosomal replication. ATP-DnaA binds to the origin of replication (oriC) to initiate formation of the DNA replication initiation complex once per cell cycle. Binds the DnaA box (a 9 base pair repeat at the origin) and separates the double-stranded (ds)DNA. Forms a right-handed helical filament on oriC DNA; dsDNA binds to the exterior of the filament while single-stranded (ss)DNA is stabiized in the filament's interior. The ATP-DnaA-oriC complex binds and stabilizes one strand of the AT-rich DNA unwinding element (DUE), permitting loading of DNA polymerase. After initiation quickly degrades to an ADP-DnaA complex that is not apt for DNA replication. Binds acidic phospholipids. In Bordetella bronchiseptica (strain ATCC BAA-588 / NCTC 13252 / RB50) (Alcaligenes bronchisepticus), this protein is Chromosomal replication initiator protein DnaA.